A 1363-amino-acid polypeptide reads, in one-letter code: Spike glycoprotein (1363 aa).

Positions 1-13 (MFLILLISLPMAL) are cleaved as a signal peptide. Residues 14–1307 (AVIGDLKCTT…GTYEYYVKWP (1294 aa)) are Extracellular-facing. The BetaCoV S1-NTD domain occupies 15–298 (VIGDLKCTTV…DFMSEIKCKT (284 aa)). Disulfide bonds link cysteine 21/cysteine 165, cysteine 160/cysteine 193, cysteine 172/cysteine 252, cysteine 286/cysteine 296, and cysteine 331/cysteine 356. 2 N-linked (GlcNAc...) asparagine; by host glycosylation sites follow: asparagine 59 and asparagine 133. Asparagine 198 carries an N-linked (GlcNAc...) asparagine; by host glycan. The BetaCoV S1-CTD domain occupies 329–617 (PDCNIEAWLN…DVNSGTTCST (289 aa)). Residue asparagine 359 is glycosylated (N-linked (GlcNAc...) asparagine; by host). Disulfide bonds link cysteine 374–cysteine 427 and cysteine 386–cysteine 615. Asparagine 437, asparagine 649, asparagine 676, asparagine 696, asparagine 714, asparagine 739, and asparagine 788 each carry an N-linked (GlcNAc...) asparagine; by host glycan. 2 fusion peptide regions span residues 914 to 935 (SAIE…VEAY) and 933 to 953 (EAYN…VQSY). Asparagine 937 carries N-linked (GlcNAc...) asparagine; by host glycosylation. Cysteine 938 and cysteine 949 are disulfide-bonded. A heptad repeat 1 region spans residues 1014–1064 (QKLIANAFNNALDAIQEGFDATNSALVKIQAVVNANAEALNNLLQQLSNRF). Positions 1043-1087 (QAVVNANAEALNNLLQQLSNRFGAISSSLQEILSRLDALEAQAQI) form a coiled coil. 6 N-linked (GlcNAc...) asparagine; by host glycosylation sites follow: asparagine 1194, asparagine 1224, asparagine 1234, asparagine 1253, asparagine 1267, and asparagine 1288. The segment at 1258–1296 (APDLSLDYINVTFLDLQDEMNRLQEAIKVLNQSYINLKD) is heptad repeat 2. The stretch at 1269–1297 (TFLDLQDEMNRLQEAIKVLNQSYINLKDI) forms a coiled coil. The helical transmembrane segment at 1308–1328 (WYVWLLIGLAGVAMLVLLFFI) threads the bilayer. Over 1329-1363 (CCCTGCGTSCFKKCGGCCDDYTGHQELVIKTSHDD) the chain is Cytoplasmic. The short motif at 1359–1363 (TSHDD) is the KxHxx element.

The protein belongs to the betacoronaviruses spike protein family. In terms of assembly, homotrimer; each monomer consists of a S1 and a S2 subunit. The resulting peplomers protrude from the virus surface as spikes. Post-translationally, specific enzymatic cleavages in vivo yield mature proteins. The precursor is processed into S1 and S2 by host cell furin or another cellular protease to yield the mature S1 and S2 proteins. Additionally, a second cleavage leads to the release of a fusion peptide after viral attachment to host cell receptor. The cytoplasmic Cys-rich domain is palmitoylated. Spike glycoprotein is digested within host endosomes.

It localises to the virion membrane. The protein resides in the host endoplasmic reticulum-Golgi intermediate compartment membrane. It is found in the host cell membrane. Functionally, attaches the virion to the cell membrane by interacting with host receptor, initiating the infection. Mediates fusion of the virion and cellular membranes by acting as a class I viral fusion protein. Under the current model, the protein has at least three conformational states: pre-fusion native state, pre-hairpin intermediate state, and post-fusion hairpin state. During viral and target cell membrane fusion, the coiled coil regions (heptad repeats) assume a trimer-of-hairpins structure, positioning the fusion peptide in close proximity to the C-terminal region of the ectodomain. The formation of this structure appears to drive apposition and subsequent fusion of viral and target cell membranes. In terms of biological role, acts as a viral fusion peptide which is unmasked following S2 cleavage occurring upon virus endocytosis. The chain is Spike glycoprotein from Bos taurus (Bovine).